A 155-amino-acid chain; its full sequence is Aspartate 1-decarboxylase (155 aa).

Ser-24 serves as the catalytic Schiff-base intermediate with substrate; via pyruvic acid. Residue Ser-24 is modified to Pyruvic acid (Ser). A substrate-binding site is contributed by Thr-56. Tyr-57 (proton donor) is an active-site residue. Residue 72–74 (GAA) participates in substrate binding.

Belongs to the PanD family. As to quaternary structure, heterooctamer of four alpha and four beta subunits. Pyruvate is required as a cofactor. Is synthesized initially as an inactive proenzyme, which is activated by self-cleavage at a specific serine bond to produce a beta-subunit with a hydroxyl group at its C-terminus and an alpha-subunit with a pyruvoyl group at its N-terminus.

It localises to the cytoplasm. The enzyme catalyses L-aspartate + H(+) = beta-alanine + CO2. It functions in the pathway cofactor biosynthesis; (R)-pantothenate biosynthesis; beta-alanine from L-aspartate: step 1/1. Functionally, catalyzes the pyruvoyl-dependent decarboxylation of aspartate to produce beta-alanine. This is Aspartate 1-decarboxylase from Methylocella silvestris (strain DSM 15510 / CIP 108128 / LMG 27833 / NCIMB 13906 / BL2).